The chain runs to 91 residues: Ribonuclease P protein component 4 (91 aa).

Residues Cys-55, Cys-58, Cys-78, and Cys-81 each coordinate Zn(2+).

This sequence belongs to the eukaryotic/archaeal RNase P protein component 4 family. In terms of assembly, consists of a catalytic RNA component and at least 4-5 protein subunits. It depends on Zn(2+) as a cofactor.

The protein localises to the cytoplasm. The enzyme catalyses Endonucleolytic cleavage of RNA, removing 5'-extranucleotides from tRNA precursor.. Functionally, part of ribonuclease P, a protein complex that generates mature tRNA molecules by cleaving their 5'-ends. The polypeptide is Ribonuclease P protein component 4 (Thermoplasma acidophilum (strain ATCC 25905 / DSM 1728 / JCM 9062 / NBRC 15155 / AMRC-C165)).